A 436-amino-acid chain; its full sequence is 3-ketoacyl-CoA thiolase (436 aa).

The Acyl-thioester intermediate role is filled by Cys-99. Active-site proton acceptor residues include His-392 and Cys-422.

This sequence belongs to the thiolase-like superfamily. Thiolase family. Heterotetramer of two alpha chains (FadJ) and two beta chains (FadI).

It localises to the cytoplasm. It carries out the reaction an acyl-CoA + acetyl-CoA = a 3-oxoacyl-CoA + CoA. The protein operates within lipid metabolism; fatty acid beta-oxidation. Functionally, catalyzes the final step of fatty acid oxidation in which acetyl-CoA is released and the CoA ester of a fatty acid two carbons shorter is formed. This Shewanella oneidensis (strain ATCC 700550 / JCM 31522 / CIP 106686 / LMG 19005 / NCIMB 14063 / MR-1) protein is 3-ketoacyl-CoA thiolase.